We begin with the raw amino-acid sequence, 148 residues long: Probable TtuB-protein conjugate cleaving protease (148 aa).

The MPN domain maps to 22-148; sequence HGLVLYVPRG…EGQEVALVVL (127 aa). Glu47 serves as the catalytic Proton donor/acceptor. The Zn(2+) site is built by His101, His103, and Asp114. Positions 101-114 match the JAMM motif motif; it reads HSHPKGPALPSPRD.

The protein belongs to the peptidase M67B family. Requires Zn(2+) as cofactor.

Its function is as follows. Probable metalloprotease that cleaves the ubiquitin-like modifier protein TtuB from protein conjugates, hydrolyzing the isopeptide bond between a lysine residue of the target protein and the C-terminal glycine of the modifier protein. Does not seem to work for all the TtuB conjugates. This is Probable TtuB-protein conjugate cleaving protease from Thermus thermophilus (strain ATCC BAA-163 / DSM 7039 / HB27).